We begin with the raw amino-acid sequence, 124 residues long: Small ribosomal subunit protein uS12 (124 aa).

Asp-89 is modified (3-methylthioaspartic acid). The interval 104 to 124 (TDGVENRKQSRSKYGTKRPKK) is disordered. Residues 112 to 124 (QSRSKYGTKRPKK) show a composition bias toward basic residues.

Belongs to the universal ribosomal protein uS12 family. Part of the 30S ribosomal subunit. Contacts proteins S8 and S17. May interact with IF1 in the 30S initiation complex.

With S4 and S5 plays an important role in translational accuracy. In terms of biological role, interacts with and stabilizes bases of the 16S rRNA that are involved in tRNA selection in the A site and with the mRNA backbone. Located at the interface of the 30S and 50S subunits, it traverses the body of the 30S subunit contacting proteins on the other side and probably holding the rRNA structure together. The combined cluster of proteins S8, S12 and S17 appears to hold together the shoulder and platform of the 30S subunit. The sequence is that of Small ribosomal subunit protein uS12 from Thermosipho melanesiensis (strain DSM 12029 / CIP 104789 / BI429).